A 447-amino-acid polypeptide reads, in one-letter code: Coagulation factor VII (447 aa).

The signal sequence occupies residues 1–23; the sequence is MLSQAWALALLCFLLSLWGSLPA. The propeptide occupies 24–40; the sequence is VFLPQEQALSILHRPRR. The 45-residue stretch at 41–85 folds into the Gla domain; sequence ANGFLEELLPGSLERECREELCSFEEAHEIFRNEERTRQFWVSYN. Glutamate 46, glutamate 47, glutamate 54, glutamate 56, glutamate 59, glutamate 60, glutamate 65, glutamate 66, glutamate 69, glutamate 74, and glutamate 75 each carry 4-carboxyglutamate. A disulfide bridge connects residues cysteine 57 and cysteine 62. The region spanning 86-122 is the EGF-like 1; calcium-binding domain; sequence DGDQCASSPCQNGGSCEDQLRSYICFCPDGFEGRNCE. 10 disulfides stabilise this stretch: cysteine 90/cysteine 101, cysteine 95/cysteine 110, cysteine 112/cysteine 121, cysteine 131/cysteine 142, cysteine 138/cysteine 152, cysteine 154/cysteine 167, cysteine 175/cysteine 302, cysteine 199/cysteine 204, cysteine 218/cysteine 234, and cysteine 350/cysteine 369. O-linked (Glc...) serine glycosylation is present at serine 92. The O-linked (Glc...) serine; alternate glycan is linked to serine 92. The O-linked (Xyl...) serine; alternate glycan is linked to serine 92. An O-linked (Fuc) serine glycan is attached at serine 100. An EGF-like 2 domain is found at 127 to 168; the sequence is SQLICANDNGGCEQYCGADPGAGRFCWCHEGYALQADGVSCA. A glycan (N-linked (GlcNAc...) asparagine) is linked at asparagine 185. The 240-residue stretch at 193-432 folds into the Peptidase S1 domain; sequence IVGGHVCPKG…YTAWLRQLMG (240 aa). The active-site Charge relay system is the histidine 233. Asparagine 243 carries N-linked (GlcNAc...) asparagine glycosylation. Aspartate 282 (charge relay system) is an active-site residue. Aspartate 378 contributes to the substrate binding site. An intrachain disulfide couples cysteine 380 to cysteine 408. The Charge relay system role is filled by serine 384.

This sequence belongs to the peptidase S1 family. In terms of assembly, heterodimer of a light chain and a heavy chain linked by a disulfide bond. In terms of processing, the vitamin K-dependent, enzymatic carboxylation of some glutamate residues allows the modified protein to bind calcium. O-glycosylated. O-fucosylated by POFUT1 on a conserved serine or threonine residue found in the consensus sequence C2-X(4,5)-[S/T]-C3 of EGF domains, where C2 and C3 are the second and third conserved cysteines. Post-translationally, can be either O-glucosylated or O-xylosylated at Ser-92 by POGLUT1. Plasma.

It is found in the secreted. It carries out the reaction Selective cleavage of Arg-|-Ile bond in factor X to form factor Xa.. In terms of biological role, initiates the extrinsic pathway of blood coagulation. Serine protease that circulates in the blood in a zymogen form. Factor VII is converted to factor VIIa by factor Xa, factor XIIa, factor IXa, or thrombin by minor proteolysis. In the presence of tissue factor and calcium ions, factor VIIa then converts factor X to factor Xa by limited proteolysis. Factor VIIa also converts factor IX to factor IXa in the presence of tissue factor and calcium. The sequence is that of Coagulation factor VII (F7) from Bos taurus (Bovine).